A 434-amino-acid chain; its full sequence is Nicotinate phosphoribosyltransferase (434 aa).

Phosphohistidine; by autocatalysis is present on His242.

Belongs to the NAPRTase family. Post-translationally, transiently phosphorylated on a His residue during the reaction cycle. Phosphorylation strongly increases the affinity for substrates and increases the rate of nicotinate D-ribonucleotide production. Dephosphorylation regenerates the low-affinity form of the enzyme, leading to product release.

It catalyses the reaction nicotinate + 5-phospho-alpha-D-ribose 1-diphosphate + ATP + H2O = nicotinate beta-D-ribonucleotide + ADP + phosphate + diphosphate. The protein operates within cofactor biosynthesis; NAD(+) biosynthesis; nicotinate D-ribonucleotide from nicotinate: step 1/1. Functionally, catalyzes the synthesis of beta-nicotinate D-ribonucleotide from nicotinate and 5-phospho-D-ribose 1-phosphate at the expense of ATP. The protein is Nicotinate phosphoribosyltransferase of Sinorhizobium fredii (strain NBRC 101917 / NGR234).